Reading from the N-terminus, the 102-residue chain is Urease subunit beta (102 aa).

It belongs to the urease beta subunit family. In terms of assembly, heterotrimer of UreA (gamma), UreB (beta) and UreC (alpha) subunits. Three heterotrimers associate to form the active enzyme.

The protein resides in the cytoplasm. The enzyme catalyses urea + 2 H2O + H(+) = hydrogencarbonate + 2 NH4(+). It participates in nitrogen metabolism; urea degradation; CO(2) and NH(3) from urea (urease route): step 1/1. In Bordetella parapertussis (strain 12822 / ATCC BAA-587 / NCTC 13253), this protein is Urease subunit beta.